The sequence spans 482 residues: Pup--protein ligase (482 aa).

Residue glutamate 16 participates in Mg(2+) binding. Arginine 60 lines the ATP pocket. Tyrosine 62 lines the Mg(2+) pocket. The active-site Proton acceptor is the aspartate 64. Glutamate 70 provides a ligand contact to Mg(2+). Residues threonine 73 and tryptophan 440 each contribute to the ATP site.

The protein belongs to the Pup ligase/Pup deamidase family. Pup-conjugating enzyme subfamily.

The enzyme catalyses ATP + [prokaryotic ubiquitin-like protein]-L-glutamate + [protein]-L-lysine = ADP + phosphate + N(6)-([prokaryotic ubiquitin-like protein]-gamma-L-glutamyl)-[protein]-L-lysine.. Its pathway is protein degradation; proteasomal Pup-dependent pathway. It participates in protein modification; protein pupylation. Catalyzes the covalent attachment of the prokaryotic ubiquitin-like protein modifier Pup to the proteasomal substrate proteins, thereby targeting them for proteasomal degradation. This tagging system is termed pupylation. The ligation reaction involves the side-chain carboxylate of the C-terminal glutamate of Pup and the side-chain amino group of a substrate lysine. In Corynebacterium glutamicum (strain R), this protein is Pup--protein ligase.